A 158-amino-acid chain; its full sequence is Large ribosomal subunit protein uL15 (158 aa).

Over residues 1-13 (MKLNEIKDNEGST) the composition is skewed to basic and acidic residues. A disordered region spans residues 1 to 45 (MKLNEIKDNEGSTHSRKRLGRGIGSGSGKTGGRGVKGQKSRSGVA). The span at 21 to 35 (RGIGSGSGKTGGRGV) shows a compositional bias: gly residues.

This sequence belongs to the universal ribosomal protein uL15 family. In terms of assembly, part of the 50S ribosomal subunit.

Binds to the 23S rRNA. The protein is Large ribosomal subunit protein uL15 of Rhizobium etli (strain CIAT 652).